Consider the following 185-residue polypeptide: Elongation factor P (185 aa).

It belongs to the elongation factor P family.

It is found in the cytoplasm. It functions in the pathway protein biosynthesis; polypeptide chain elongation. Involved in peptide bond synthesis. Stimulates efficient translation and peptide-bond synthesis on native or reconstituted 70S ribosomes in vitro. Probably functions indirectly by altering the affinity of the ribosome for aminoacyl-tRNA, thus increasing their reactivity as acceptors for peptidyl transferase. This is Elongation factor P from Lactococcus lactis subsp. cremoris (strain MG1363).